The primary structure comprises 1015 residues: MPSDSDDVAAVKQPWSQLIVDISNFLSEHPQSKTSQALLPSCNGVWSDEEKLELIEAFGHKKQSHLTKSGVKAVLAAFEGDRTQPDVIFLCRLLHLIFSHFSSENDRKKEKYIVKCDVIATLTRITRKRIIMTLDVTDESSIDHNLDEVLWKLLHKIGLKDPRVSLKVRMGGLISPMCKLFIQKDTLPELFLPFFIKISRSPRNGQAIGRYEGFMTRLLVKIKALDASDQTSQVLLLDKHLQLLFFTMKNKRTRTQLLRENICKYLLEVLRRHLASSSNSRPTRLLSSLFGTFDKSLSAAHTEVVIGTIAILRLLSNFKKARDELKNLQVLDICSRELKEFWSDEWKTGPKSRIVDSLSALCLRCMSPLPYPLETRRFPIDFPLPTATPSTPGGHGRIRNSSSINISFDNGRSSDEDGMDEEDEAFVRDDDDEGKDDRGSDDDDGKDDDEINGALPKTTRLNPQQLAKYAPFFVENEQGTLQPTFSMIYQTNQESWRSICEKTRHVMPIHHHLPIEMFNTPTRIREKTAKTSNNMKKMIIEELDKPERSATSNQVIYDLDTAAFDGLPSPELPFVTGGGKLDTSKDLQFDSRFESGNLRMVIQVAPTHYELFLSPDVNQLRDHYQWFFFQVSNMRKSVKYTFEIVNCLKSTSLYSQGMQPVMYSMMESANGWRRVGENVCYFRNLYINENEEKKNVEEQKKKKYYYSIRFNVTFQNTGDICYIAYHYPYTYSFLNSSLSMLKKRKQENVYCREDVIGHSLAGNPIKMLTITTPASAAEIAAREVIVLSARVHPGETNASWIMQGILENLLCRQSNEMYRLRESFIFKIVPMINPDGVTNGSHRCSLAGIDLNRMWDRPNEALHPEVFATKAIIQYLCEVANKKPFAYVDIHGHSKKWDYFVYGNNASESWRADDVLDVGAAQLEEELHLALPKALEATCPSRFNASECRFNITRAKESSARVNVWRQFGVSTAYTLESTFCGFHKGQNSGYQINTSDLKEIGRDLLHSFLEMTKT.

The segment at 384–462 (LPTATPSTPG…GALPKTTRLN (79 aa)) is disordered. Residues 416-451 (EDGMDEEDEAFVRDDDDEGKDDRGSDDDDGKDDDEI) are compositionally biased toward acidic residues. The region spanning 727 to 1013 (YPYTYSFLNS…DLLHSFLEMT (287 aa)) is the Peptidase M14 domain. Zn(2+) contacts are provided by His792, Glu795, and His891. Catalysis depends on Glu977, which acts as the Proton donor/acceptor.

Belongs to the peptidase M14 family. Zn(2+) serves as cofactor. In terms of tissue distribution, in hermaphrodites and males, expressed in amphid and IL2 ciliated sensory neurons. In males, expressed in CEM head neurons, RnB and HOB tail neurons, and in gubernacular erector and retractor muscles.

Its subcellular location is the perikaryon. The protein resides in the cell projection. It is found in the cilium. It localises to the dendrite. Functionally, catalyzes the deglutamylation of polyglutamate side chains generated by post-translational polyglutamylation of proteins such as tubulins. Via the deglutamylation of tubulin, regulates the localization and velocity of kinesin motors and the structural integrity of microtubules in sensory cilia. In male CEM sensory neurons, regulates the cilia release of bioactive extracellular vesicles. Also regulates microtubule dynamics in uterine muscle cells. The chain is Cytosolic carboxypeptidase 1 from Caenorhabditis elegans.